A 168-amino-acid chain; its full sequence is Lipoprotein signal peptidase (168 aa).

3 helical membrane passes run 8–28 (LYYL…WLVV), 61–81 (GQFW…VIYI), and 91–111 (FGIA…DRIF). Active-site residues include Asp-117 and Asp-135. Residues 128 to 148 (FPIFNVADAALTIGVALMFIY) traverse the membrane as a helical segment.

The protein belongs to the peptidase A8 family.

The protein resides in the cell membrane. It catalyses the reaction Release of signal peptides from bacterial membrane prolipoproteins. Hydrolyzes -Xaa-Yaa-Zaa-|-(S,diacylglyceryl)Cys-, in which Xaa is hydrophobic (preferably Leu), and Yaa (Ala or Ser) and Zaa (Gly or Ala) have small, neutral side chains.. Its pathway is protein modification; lipoprotein biosynthesis (signal peptide cleavage). Its function is as follows. This protein specifically catalyzes the removal of signal peptides from prolipoproteins. The chain is Lipoprotein signal peptidase from Anoxybacillus flavithermus (strain DSM 21510 / WK1).